Consider the following 442-residue polypeptide: NALCN channel auxiliary factor 2 (442 aa).

Residues 42–62 traverse the membrane as a helical segment; the sequence is LASLLFFTVLLSNHLWLVSAG. N-linked (GlcNAc...) asparagine glycosylation is found at N77, N100, N171, N279, and N354. Residues 406–426 form a helical membrane-spanning segment; it reads CVLVLMLLHTMASFSVVQNGV.

It belongs to the NALF family.

It localises to the membrane. Probable component of the NALCN channel complex, a channel that regulates the resting membrane potential and controls neuronal excitability. The chain is NALCN channel auxiliary factor 2 (nalf2) from Xenopus tropicalis (Western clawed frog).